Reading from the N-terminus, the 201-residue chain is Elongation factor Ts (201 aa).

The interval 81–84 (TDFV) is involved in Mg(2+) ion dislocation from EF-Tu.

This sequence belongs to the EF-Ts family.

The protein localises to the cytoplasm. Its function is as follows. Associates with the EF-Tu.GDP complex and induces the exchange of GDP to GTP. It remains bound to the aminoacyl-tRNA.EF-Tu.GTP complex up to the GTP hydrolysis stage on the ribosome. The chain is Elongation factor Ts from Syntrophus aciditrophicus (strain SB).